The chain runs to 594 residues: (-)-endo-fenchol synthase, chloroplastic (594 aa).

Residues Met1 to Val50 constitute a chloroplast transit peptide. The Mg(2+) site is built by Asp348, Asp352, Asp492, and Glu500. A DDXXD motif motif is present at residues Asp348–Asp352.

This sequence belongs to the terpene synthase family. Tpsa subfamily. Requires Mg(2+) as cofactor. It depends on Mn(2+) as a cofactor. Expressed at low levels in leaves.

The protein localises to the plastid. It is found in the chloroplast. The catalysed reaction is (2E)-geranyl diphosphate = alpha-pinene + diphosphate. The enzyme catalyses (2E)-geranyl diphosphate + H2O = (1S,2S,4R)-endo-fenchol + diphosphate. It catalyses the reaction (2E)-geranyl diphosphate = limonene + diphosphate. It functions in the pathway secondary metabolite biosynthesis; terpenoid biosynthesis. Monoterpene synthase involved in the biosynthesis of volatile compounds widely used in aromatherapy and folk medicine, and present in culinary herbs. Mediates the conversion of (2E)-geranyl diphosphate (GPP) into alpha fenchol, limonene and alpha-pinene and, as minor compounds, into beta-myrcene, alpha-terpinolene and alpha-phellandrene. The protein is (-)-endo-fenchol synthase, chloroplastic of Lavandula stoechas (Butterfly lavender).